The primary structure comprises 93 residues: Probable endoribonuclease MazF1 (93 aa).

The protein belongs to the PemK/MazF family. Forms a complex with cognate antitoxin MazE1.

In terms of biological role, toxic component of a type II toxin-antitoxin (TA) system, its cognate antitoxin is MazE1. Probably an endoribonuclease. The chain is Probable endoribonuclease MazF1 (mazF1) from Mycobacterium tuberculosis (strain ATCC 25618 / H37Rv).